The sequence spans 180 residues: Protein SPMIP9 (180 aa).

As to quaternary structure, microtubule inner protein component of sperm flagellar doublet microtubules.

The protein resides in the nucleus. Its subcellular location is the cytoplasm. It is found in the cytoskeleton. The protein localises to the flagellum axoneme. In terms of biological role, microtubule inner protein (MIP) part of the dynein-decorated doublet microtubules (DMTs) in flagella axoneme. This Bos taurus (Bovine) protein is Protein SPMIP9 (SPMIP9).